The sequence spans 367 residues: UDP-N-acetylglucosamine--N-acetylmuramyl-(pentapeptide) pyrophosphoryl-undecaprenol N-acetylglucosamine transferase (367 aa).

UDP-N-acetyl-alpha-D-glucosamine is bound by residues 15–17, Asn127, Arg163, Ser191, Ile249, and Gln294; that span reads TGG.

The protein belongs to the glycosyltransferase 28 family. MurG subfamily.

The protein localises to the cell inner membrane. It catalyses the reaction di-trans,octa-cis-undecaprenyl diphospho-N-acetyl-alpha-D-muramoyl-L-alanyl-D-glutamyl-meso-2,6-diaminopimeloyl-D-alanyl-D-alanine + UDP-N-acetyl-alpha-D-glucosamine = di-trans,octa-cis-undecaprenyl diphospho-[N-acetyl-alpha-D-glucosaminyl-(1-&gt;4)]-N-acetyl-alpha-D-muramoyl-L-alanyl-D-glutamyl-meso-2,6-diaminopimeloyl-D-alanyl-D-alanine + UDP + H(+). It participates in cell wall biogenesis; peptidoglycan biosynthesis. Its function is as follows. Cell wall formation. Catalyzes the transfer of a GlcNAc subunit on undecaprenyl-pyrophosphoryl-MurNAc-pentapeptide (lipid intermediate I) to form undecaprenyl-pyrophosphoryl-MurNAc-(pentapeptide)GlcNAc (lipid intermediate II). The polypeptide is UDP-N-acetylglucosamine--N-acetylmuramyl-(pentapeptide) pyrophosphoryl-undecaprenol N-acetylglucosamine transferase (Burkholderia thailandensis (strain ATCC 700388 / DSM 13276 / CCUG 48851 / CIP 106301 / E264)).